The following is a 374-amino-acid chain: Acetylxylan esterase (374 aa).

The signal sequence occupies residues 1–22 (MVFSPRLSAFVALVALTNAATA). The 35-residue stretch at 23–57 (VPMYGQCGGSGYTGPTQCDPGLVCVKLNDWYSQCQ) folds into the CBM1 domain. The segment at 58-99 (SGGAQPPVTTTSSPPVTVSPPPSTTTVAPPVATGPPAPEIPA) is ser/Thr/Pro-rich linker. Positions 60–86 (GAQPPVTTTSSPPVTVSPPPSTTTVAP) are disordered. Positions 63–73 (PPVTTTSSPPV) are enriched in low complexity. The catalytic stretch occupies residues 100-374 (GQLTQLRSFG…EVVAMDFFGL (275 aa)). Asparagine 114 is a glycosylation site (N-linked (GlcNAc...) asparagine). Serine 219 serves as the catalytic Charge relay system. N-linked (GlcNAc...) asparagine glycosylation occurs at asparagine 320.

Belongs to the carbohydrate esterase 1 (CE1) family. AxeA subfamily. Monomer. Glycosylated.

Its subcellular location is the secreted. The catalysed reaction is Deacetylation of xylans and xylo-oligosaccharides.. It functions in the pathway glycan degradation; xylan degradation. Acetylxylan esterase involved in the hydrolysis of xylan, a major structural heterogeneous polysaccharide found in plant biomass representing the second most abundant polysaccharide in the biosphere, after cellulose. Degrades acetylated xylans by cleaving acetyl side groups from the hetero-xylan backbone. The chain is Acetylxylan esterase from Coprinopsis cinerea (strain Okayama-7 / 130 / ATCC MYA-4618 / FGSC 9003) (Inky cap fungus).